We begin with the raw amino-acid sequence, 300 residues long: Glycine betaine/carnitine transport binding protein GbuC (300 aa).

The first 20 residues, 1-20 (MLKKLITTAVLAMLIFTLAA), serve as a signal peptide directing secretion. Cys-21 is lipidated: N-palmitoyl cysteine. Residue Cys-21 is the site of S-diacylglycerol cysteine attachment.

The complex is composed of two ATP-binding proteins (GbuA), two transmembrane proteins (GbuB) and a solute-binding protein (GbuC).

It is found in the cell membrane. Its activity is regulated as follows. The complex is activated by an osmotic gradient or by low temperature. Functionally, part of the ABC transporter complex GbuABC involved in glycine betaine uptake. Involved, with BetL and OpuC, in osmoprotection and cryoprotection of Listeria. Can also uptake carnitine when carnitine is abundant in the growth medium. This Listeria monocytogenes serotype 1/2a (strain 10403S) protein is Glycine betaine/carnitine transport binding protein GbuC (gbuC).